A 169-amino-acid chain; its full sequence is Ribosome maturation factor RimM (169 aa).

One can recognise a PRC barrel domain in the interval Gly93–Leu166.

Belongs to the RimM family. As to quaternary structure, binds ribosomal protein uS19.

The protein resides in the cytoplasm. An accessory protein needed during the final step in the assembly of 30S ribosomal subunit, possibly for assembly of the head region. Essential for efficient processing of 16S rRNA. May be needed both before and after RbfA during the maturation of 16S rRNA. It has affinity for free ribosomal 30S subunits but not for 70S ribosomes. The sequence is that of Ribosome maturation factor RimM from Exiguobacterium sibiricum (strain DSM 17290 / CCUG 55495 / CIP 109462 / JCM 13490 / 255-15).